Here is a 333-residue protein sequence, read N- to C-terminus: Electron transfer flavoprotein subunit alpha, mitochondrial (333 aa).

The N-terminal 19 residues, 1–19, are a transit peptide targeting the mitochondrion; the sequence is MFRAAAPGQLRRAASSLRF. Residues 20–204 are domain I; sequence QSTLVIAEHA…EISEWLDQKL (185 aa). Lys59 is subject to N6-acetyllysine; alternate. Lys59 is modified (N6-succinyllysine; alternate). Residue Lys62 is modified to N6-acetyllysine. Residue Lys69 is modified to N6-acetyllysine; alternate. Position 69 is an N6-succinyllysine; alternate (Lys69). Lys75 bears the N6-acetyllysine mark. Thr93 carries the post-translational modification Phosphothreonine. Residues Lys101 and Lys139 each carry the N6-acetyllysine modification. A Phosphoserine modification is found at Ser140. Lys158 carries the N6-acetyllysine; alternate modification. Lys158 carries the post-translational modification N6-succinyllysine; alternate. Residue Lys164 is modified to N6-acetyllysine. Position 187 is an N6-succinyllysine (Lys187). N6-acetyllysine; alternate is present on Lys203. Lys203 carries the post-translational modification N6-succinyllysine; alternate. Residues 205 to 333 form a domain II region; the sequence is TKSDRPELTG…PEMTEILKKK (129 aa). Lys216 is modified (N6-succinyllysine). Arg223 lines the FAD pocket. An N6-acetyllysine; alternate mark is found at Lys226 and Lys232. An N6-succinyllysine; alternate mark is found at Lys226 and Lys232. Residues Ser248, 263–266, 281–286, and Asn300 contribute to the FAD site; these read VGQT and SGAIQH. N6-succinyllysine is present on Lys301. 318–319 contacts FAD; the sequence is DL.

This sequence belongs to the ETF alpha-subunit/FixB family. In terms of assembly, heterodimer composed of ETFA and ETFB. Identified in a complex that contains ETFA, ETFB and ETFRF1. Interaction with ETFRF1 promotes dissociation of the bound FAD and loss of electron transfer activity. Interacts with TASOR. FAD is required as a cofactor.

Its subcellular location is the mitochondrion matrix. Functionally, heterodimeric electron transfer flavoprotein that accepts electrons from several mitochondrial dehydrogenases, including acyl-CoA dehydrogenases, glutaryl-CoA and sarcosine dehydrogenase. It transfers the electrons to the main mitochondrial respiratory chain via ETF-ubiquinone oxidoreductase (ETF dehydrogenase). Required for normal mitochondrial fatty acid oxidation and normal amino acid metabolism. This chain is Electron transfer flavoprotein subunit alpha, mitochondrial (ETFA), found in Macaca fascicularis (Crab-eating macaque).